We begin with the raw amino-acid sequence, 480 residues long: Na(+)/H(+) antiporter NhaA (480 aa).

The next 11 helical transmembrane spans lie at 34–54, 76–96, 113–133, 144–164, 174–194, 197–217, 223–243, 282–302, 312–332, 350–370, and 381–401; these read VGGVLLLVATVTALVWANIPA, LSVAHWAADGLLAVFFFVAGI, AVLPVVAALCGMAVPALVYTL, GWAVPTATDIAFALAVLAVIG, FLLTLAVVDDLFAILIIAIFF, RINFAALGGAVAGLAVFWLLL, GWYVYVPLAVVVWALMYNSGV, GLAVPLFALFSAGVVVSGGAL, LGVVLGLVVGKTLGIFGSTWL, IFAVASLAGIGFTVSLLIGEL, and EVKAAVLTGSLIAALCATVLL. Residues 454-480 form a disordered region; that stretch reads AAEKAAAARHGGAEVPGGAGEEDGRPA.

It belongs to the NhaA Na(+)/H(+) (TC 2.A.33) antiporter family.

Its subcellular location is the cell membrane. The enzyme catalyses Na(+)(in) + 2 H(+)(out) = Na(+)(out) + 2 H(+)(in). Its function is as follows. Na(+)/H(+) antiporter that extrudes sodium in exchange for external protons. This is Na(+)/H(+) antiporter NhaA from Streptomyces antibioticus.